The following is a 122-amino-acid chain: Large ribosomal subunit protein uL14 (122 aa).

The protein belongs to the universal ribosomal protein uL14 family. In terms of assembly, part of the 50S ribosomal subunit. Forms a cluster with proteins L3 and L19. In the 70S ribosome, L14 and L19 interact and together make contacts with the 16S rRNA in bridges B5 and B8.

Functionally, binds to 23S rRNA. Forms part of two intersubunit bridges in the 70S ribosome. In Acidiphilium cryptum (strain JF-5), this protein is Large ribosomal subunit protein uL14.